The primary structure comprises 193 residues: Large ribosomal subunit protein uL5 (193 aa).

The protein belongs to the universal ribosomal protein uL5 family. As to quaternary structure, part of the 50S ribosomal subunit; part of the 5S rRNA/L5/L18/L25 subcomplex. Contacts the 5S rRNA and the P site tRNA. Forms a bridge to the 30S subunit in the 70S ribosome.

Its function is as follows. This is one of the proteins that bind and probably mediate the attachment of the 5S RNA into the large ribosomal subunit, where it forms part of the central protuberance. In the 70S ribosome it contacts protein S13 of the 30S subunit (bridge B1b), connecting the 2 subunits; this bridge is implicated in subunit movement. Contacts the P site tRNA; the 5S rRNA and some of its associated proteins might help stabilize positioning of ribosome-bound tRNAs. The sequence is that of Large ribosomal subunit protein uL5 from Renibacterium salmoninarum (strain ATCC 33209 / DSM 20767 / JCM 11484 / NBRC 15589 / NCIMB 2235).